The sequence spans 41 residues: Large ribosomal subunit protein bL36 (41 aa).

Belongs to the bacterial ribosomal protein bL36 family.

The chain is Large ribosomal subunit protein bL36 from Mesorhizobium japonicum (strain LMG 29417 / CECT 9101 / MAFF 303099) (Mesorhizobium loti (strain MAFF 303099)).